Reading from the N-terminus, the 429-residue chain is MGFLEEEGRWNLSFSGAGYLGAHHVGATECLRQRAPRLLQGARRIYGSSSGALNAVSIVCGKSVDFCCSHLLGMVGQLERLSLSILHPAYAPIEHVKQQLQDALPPDAHVLASQRLGISLTRWPDGRNFLVTDFATCDELIQALVCTLYFPFYCGLIPPEFRGERYIDGALSNNLPFADCPSTITVSPFHGTVDICPQSTSPNLHELNVFNFSFQISTENFFLGLICLIPPSLEVVADNCRQGYLDALRFLERRGLTKEPVLWTLVSKEPPAPADGNWDAGCDQRWKGGLSLNWKVPHVQVKDVPNFEQLSPELEAALKKACTRDPSRWARFWHSGPGQVLTYLLLPCTLPFEYIYFRSRRLVVWLPDVPADLWWMQGLLRNMALEVFSRTKAQLLGPISPPATRVLETSPLQPQIAPHREELGPTHQA.

Residues 12-181 (LSFSGAGYLG…SNNLPFADCP (170 aa)) form the PNPLA domain. The GXGXXG signature appears at 16–21 (GAGYLG). The GXSXG motif lies at 47–51 (GSSSG). The Nucleophile role is filled by Ser49. The active-site Proton acceptor is Asp168. The DGA/G motif lies at 168-170 (DGA).

As to expression, expressed in brain and pituitary gland.

It carries out the reaction a triacylglycerol + H2O = a diacylglycerol + a fatty acid + H(+). Functionally, has abundant triacylglycerol lipase activity. The protein is Patatin-like phospholipase domain-containing protein 5 of Homo sapiens (Human).